The chain runs to 220 residues: Guanylate kinase (220 aa).

In terms of domain architecture, Guanylate kinase-like spans 15–194; that stretch reads GLMLVISSPS…AFDAVQSIVK (180 aa). 22–29 serves as a coordination point for ATP; it reads SPSGAGKS.

Belongs to the guanylate kinase family.

Its subcellular location is the cytoplasm. The catalysed reaction is GMP + ATP = GDP + ADP. Its function is as follows. Essential for recycling GMP and indirectly, cGMP. The sequence is that of Guanylate kinase from Rhizobium etli (strain ATCC 51251 / DSM 11541 / JCM 21823 / NBRC 15573 / CFN 42).